The sequence spans 330 residues: Phosphate acyltransferase (330 aa).

It belongs to the PlsX family. In terms of assembly, homodimer. Probably interacts with PlsY.

It is found in the cytoplasm. It carries out the reaction a fatty acyl-[ACP] + phosphate = an acyl phosphate + holo-[ACP]. The protein operates within lipid metabolism; phospholipid metabolism. Catalyzes the reversible formation of acyl-phosphate (acyl-PO(4)) from acyl-[acyl-carrier-protein] (acyl-ACP). This enzyme utilizes acyl-ACP as fatty acyl donor, but not acyl-CoA. The chain is Phosphate acyltransferase from Bacillus cytotoxicus (strain DSM 22905 / CIP 110041 / 391-98 / NVH 391-98).